We begin with the raw amino-acid sequence, 842 residues long: Glucans biosynthesis glucosyltransferase H (842 aa).

The next 8 helical transmembrane spans lie at 140 to 160 (ILLL…KTIL), 194 to 214 (ILIL…TALM), 513 to 533 (VFLT…FLAL), 568 to 588 (IALF…SIIL), 600 to 620 (FIRV…LAPV), 622 to 642 (MLFH…VWNS), 656 to 676 (FMRH…MAWL), and 680 to 700 (FLFW…VSAI).

This sequence belongs to the glycosyltransferase 2 family. OpgH subfamily.

It localises to the cell inner membrane. It functions in the pathway glycan metabolism; osmoregulated periplasmic glucan (OPG) biosynthesis. Its function is as follows. Involved in the biosynthesis of osmoregulated periplasmic glucans (OPGs). The polypeptide is Glucans biosynthesis glucosyltransferase H (Klebsiella pneumoniae (strain 342)).